Here is a 496-residue protein sequence, read N- to C-terminus: Probable cytosol aminopeptidase (496 aa).

2 residues coordinate Mn(2+): Lys-262 and Asp-267. Lys-274 is an active-site residue. Residues Asp-285, Asp-344, and Glu-346 each coordinate Mn(2+). Arg-348 is a catalytic residue.

This sequence belongs to the peptidase M17 family. Mn(2+) serves as cofactor.

It localises to the cytoplasm. The enzyme catalyses Release of an N-terminal amino acid, Xaa-|-Yaa-, in which Xaa is preferably Leu, but may be other amino acids including Pro although not Arg or Lys, and Yaa may be Pro. Amino acid amides and methyl esters are also readily hydrolyzed, but rates on arylamides are exceedingly low.. The catalysed reaction is Release of an N-terminal amino acid, preferentially leucine, but not glutamic or aspartic acids.. Its function is as follows. Presumably involved in the processing and regular turnover of intracellular proteins. Catalyzes the removal of unsubstituted N-terminal amino acids from various peptides. The polypeptide is Probable cytosol aminopeptidase (Rhizobium etli (strain CIAT 652)).